The primary structure comprises 397 residues: MLNNKRLFTSESVTEGHPDKIADQVSDAILDAILKDDPNARVACETTVTTGMALIAGEISTTTYVDIPKVVRETIKEIGYTRAKYGYDYETMAILTAIDEQSPDIAQGVDKALEYRDKDSEEEIEATGAGDQGLMFGYATNETETYMPLAIYLSHQLAKRLSDVRKDGTLNYLRPDGKVQVTVEYDENDNPVRIDTIVVSTQHADDVTLEQIQEDIKAHVIYPTVPENLINEQTKFYINPTGRFVIGGPQGDAGLTGRKIIVDTYGGYARHGGGCFSGKDPTKVDRSAAYAARYVAKNIVAAGLADQCEVQLAYAIGVAEPVSIAIDTFGTGKVSEGQLVEAVRKHFDLRPAGIIKMLDLKQPIYKQTAAYGHFGRTDVLFPWEKLDKVEELKDAVK.

His-17 provides a ligand contact to ATP. Residue Asp-19 coordinates Mg(2+). Position 45 (Glu-45) interacts with K(+). 2 residues coordinate L-methionine: Glu-58 and Gln-101. Positions Gln-101–Lys-111 are flexible loop. ATP contacts are provided by residues Asp-176–Lys-178, Arg-243–Phe-244, Asp-252, Arg-258–Lys-259, and Lys-279. Residue Asp-252 participates in L-methionine binding. An L-methionine-binding site is contributed by Lys-283.

This sequence belongs to the AdoMet synthase family. In terms of assembly, homotetramer; dimer of dimers. It depends on Mg(2+) as a cofactor. Requires K(+) as cofactor.

Its subcellular location is the cytoplasm. It catalyses the reaction L-methionine + ATP + H2O = S-adenosyl-L-methionine + phosphate + diphosphate. It participates in amino-acid biosynthesis; S-adenosyl-L-methionine biosynthesis; S-adenosyl-L-methionine from L-methionine: step 1/1. In terms of biological role, catalyzes the formation of S-adenosylmethionine (AdoMet) from methionine and ATP. The overall synthetic reaction is composed of two sequential steps, AdoMet formation and the subsequent tripolyphosphate hydrolysis which occurs prior to release of AdoMet from the enzyme. This Staphylococcus aureus (strain MRSA252) protein is S-adenosylmethionine synthase.